The sequence spans 503 residues: Protein DETOXIFICATION 36 (503 aa).

The next 12 membrane-spanning stretches (helical) occupy residues 54–74 (LFHL…MSML), 87–107 (LAAA…LMLG), 137–157 (IVLV…KPLL), 166–186 (VASV…AYAV), 203–223 (SAYI…LSVF), 225–245 (FGWG…IIVL), 271–293 (GLWD…SWYS), 313–333 (LAIC…FNAA), 355–375 (AVTT…ILSW), 399–419 (FLAI…VAVG), 427–447 (AYVN…VLGF), and 456–476 (IWTG…IVTF).

This sequence belongs to the multi antimicrobial extrusion (MATE) (TC 2.A.66.1) family.

The protein localises to the membrane. The chain is Protein DETOXIFICATION 36 from Arabidopsis thaliana (Mouse-ear cress).